The following is a 79-amino-acid chain: Exodeoxyribonuclease 7 small subunit (79 aa).

Belongs to the XseB family. Heterooligomer composed of large and small subunits.

It is found in the cytoplasm. It carries out the reaction Exonucleolytic cleavage in either 5'- to 3'- or 3'- to 5'-direction to yield nucleoside 5'-phosphates.. Its function is as follows. Bidirectionally degrades single-stranded DNA into large acid-insoluble oligonucleotides, which are then degraded further into small acid-soluble oligonucleotides. The polypeptide is Exodeoxyribonuclease 7 small subunit (Lactococcus lactis subsp. cremoris (strain MG1363)).